The chain runs to 244 residues: Triosephosphate isomerase (244 aa).

Position 9-11 (9-11 (NWK)) interacts with substrate. The active-site Electrophile is His-93. Residue Glu-160 is the Proton acceptor of the active site. Substrate contacts are provided by Gly-166 and Ser-206.

Belongs to the triosephosphate isomerase family. As to quaternary structure, homodimer.

Its subcellular location is the cytoplasm. The catalysed reaction is D-glyceraldehyde 3-phosphate = dihydroxyacetone phosphate. It functions in the pathway carbohydrate biosynthesis; gluconeogenesis. The protein operates within carbohydrate degradation; glycolysis; D-glyceraldehyde 3-phosphate from glycerone phosphate: step 1/1. Functionally, involved in the gluconeogenesis. Catalyzes stereospecifically the conversion of dihydroxyacetone phosphate (DHAP) to D-glyceraldehyde-3-phosphate (G3P). The protein is Triosephosphate isomerase of Mycoplasma genitalium (strain ATCC 33530 / DSM 19775 / NCTC 10195 / G37) (Mycoplasmoides genitalium).